The chain runs to 438 residues: Anthranilate synthase component 1 (438 aa).

L-tryptophan-binding positions include serine 45 and 220-222 (PYL). Position 255-256 (255-256 (GT)) interacts with chorismate. Glutamate 282 contacts Mg(2+). Residues tyrosine 370, arginine 389, 405-407 (GAG), and glycine 407 contribute to the chorismate site. Residue glutamate 420 coordinates Mg(2+).

The protein belongs to the anthranilate synthase component I family. In terms of assembly, heterotetramer consisting of two non-identical subunits: a beta subunit (TrpG) and a large alpha subunit (TrpE). Mg(2+) is required as a cofactor.

It carries out the reaction chorismate + L-glutamine = anthranilate + pyruvate + L-glutamate + H(+). The protein operates within amino-acid biosynthesis; L-tryptophan biosynthesis; L-tryptophan from chorismate: step 1/5. Feedback inhibited by tryptophan. Functionally, part of a heterotetrameric complex that catalyzes the two-step biosynthesis of anthranilate, an intermediate in the biosynthesis of L-tryptophan. In the first step, the glutamine-binding beta subunit (TrpG) of anthranilate synthase (AS) provides the glutamine amidotransferase activity which generates ammonia as a substrate that, along with chorismate, is used in the second step, catalyzed by the large alpha subunit of AS (TrpE) to produce anthranilate. In the absence of TrpG, TrpE can synthesize anthranilate directly from chorismate and high concentrations of ammonia. The protein is Anthranilate synthase component 1 (trpE) of Aeropyrum pernix (strain ATCC 700893 / DSM 11879 / JCM 9820 / NBRC 100138 / K1).